A 152-amino-acid chain; its full sequence is Ubiquitin-conjugating enzyme E2 N (152 aa).

A UBC core domain is found at 3 to 149; that stretch reads GLPRRIIKET…ARAWTRLYAM (147 aa). Position 82 is an N6-acetyllysine (lysine 82). The Glycyl thioester intermediate role is filled by cysteine 87. A Glycyl lysine isopeptide (Lys-Gly) (interchain with G-Cter in ISG15) cross-link involves residue lysine 92.

This sequence belongs to the ubiquitin-conjugating enzyme family. Heterodimer with UBE2V2. Interacts (UBE2V2-UBE2N heterodimer) with the E3 ligase STUB1 (via the U-box domain); the complex has a specific 'Lys-63'-linked polyubiquitination activity. Interacts with RNF8 and RNF168. Interacts with RNF11. Interacts with the E3 ligases, HLTF and SHPRH; the interactions promote the 'Lys-63'-linked polyubiquitination of PCNA upon genotoxic stress and lead to DNA repair. Interacts with ARIH2 (via RING-type 2). Interacts with OTUB1; leading to inhibit E2-conjugating activity. Interacts with GPS2; leading to inhibit E2-conjugating activity. Interacts with RIGI and RNF135; involved in RIGI ubiquitination and activation. In terms of processing, conjugation to ISG15 impairs formation of the thioester bond with ubiquitin but not interaction with UBE2V2.

The catalysed reaction is S-ubiquitinyl-[E1 ubiquitin-activating enzyme]-L-cysteine + [E2 ubiquitin-conjugating enzyme]-L-cysteine = [E1 ubiquitin-activating enzyme]-L-cysteine + S-ubiquitinyl-[E2 ubiquitin-conjugating enzyme]-L-cysteine.. It participates in protein modification; protein ubiquitination. Its activity is regulated as follows. Activity is inhibited by binding to OTUB1, which prevents 'Lys-63'-linked polyubiquitination. Activity is inhibited by GPS2, leading to prevent 'Lys-63'-linked polyubiquitination. Functionally, the UBE2V1-UBE2N and UBE2V2-UBE2N heterodimers catalyze the synthesis of non-canonical 'Lys-63'-linked polyubiquitin chains. This type of polyubiquitination does not lead to protein degradation by the proteasome. Mediates transcriptional activation of target genes. Plays a role in the control of progress through the cell cycle and differentiation. Plays a role in the error-free DNA repair pathway and contributes to the survival of cells after DNA damage. Acts together with the E3 ligases, HLTF and SHPRH, in the 'Lys-63'-linked poly-ubiquitination of PCNA upon genotoxic stress, which is required for DNA repair. Appears to act together with E3 ligase RNF5 in the 'Lys-63'-linked polyubiquitination of JKAMP thereby regulating JKAMP function by decreasing its association with components of the proteasome and ERAD. Promotes TRIM5 capsid-specific restriction activity and the UBE2V1-UBE2N heterodimer acts in concert with TRIM5 to generate 'Lys-63'-linked polyubiquitin chains which activate the MAP3K7/TAK1 complex which in turn results in the induction and expression of NF-kappa-B and MAPK-responsive inflammatory genes. Together with RNF135 and UB2V1, catalyzes the viral RNA-dependent 'Lys-63'-linked polyubiquitination of RIGI to activate the downstream signaling pathway that leads to interferon beta production. UBE2V1-UBE2N together with TRAF3IP2 E3 ubiquitin ligase mediate 'Lys-63'-linked polyubiquitination of TRAF6, a component of IL17A-mediated signaling pathway. The polypeptide is Ubiquitin-conjugating enzyme E2 N (UBE2N) (Bos taurus (Bovine)).